Here is a 284-residue protein sequence, read N- to C-terminus: 2-dehydro-3-deoxyphosphooctonate aldolase (284 aa).

This sequence belongs to the KdsA family.

Its subcellular location is the cytoplasm. The enzyme catalyses D-arabinose 5-phosphate + phosphoenolpyruvate + H2O = 3-deoxy-alpha-D-manno-2-octulosonate-8-phosphate + phosphate. The protein operates within carbohydrate biosynthesis; 3-deoxy-D-manno-octulosonate biosynthesis; 3-deoxy-D-manno-octulosonate from D-ribulose 5-phosphate: step 2/3. It functions in the pathway bacterial outer membrane biogenesis; lipopolysaccharide biosynthesis. The chain is 2-dehydro-3-deoxyphosphooctonate aldolase from Bordetella petrii (strain ATCC BAA-461 / DSM 12804 / CCUG 43448).